Reading from the N-terminus, the 891-residue chain is Iron-regulated surface determinant protein H (891 aa).

Positions 1-40 (MNKHHPKLRSFYSIRKSTLGVASVIVSTLFLITSQHQAQA) are cleaved as a signal peptide. The tract at residues 42-77 (ENTNTSDKISENQNNNATTTQQPKDTNQTQPATQPV) is disordered. Low complexity predominate over residues 53 to 63 (NQNNNATTTQQ). Residues 64–77 (PKDTNQTQPATQPV) are compositionally biased toward polar residues. The region spanning 105–232 (DIGPREQVNF…IYNDPSLVKS (128 aa)) is the NEAT 1 domain. The interval 239 to 324 (VTNDQSSSDA…NQSDVNQQYP (86 aa)) is disordered. The segment covering 240 to 276 (TNDQSSSDASNQTNTNTSNQNTSTTNNANNQPQATTN) has biased composition (low complexity). Polar residues predominate over residues 277-323 (MSQPAQPKSSANADQASSQPAHETNSNGNTNDKTNESSNQSDVNQQY). NEAT domains are found at residues 345-471 (TADN…DYVD) and 543-660 (QLTD…TKDD). Disordered regions lie at residues 657 to 718 (TKDD…DADN), 752 to 777 (IAKD…KDSN), and 835 to 864 (TVKT…GETT). Polar residues-rich tracts occupy residues 663 to 677 (SQNN…QTGQ) and 687 to 697 (AENSSTATNPK). Residues 698–718 (DASDKADVIEPESDVVKDADN) show a composition bias toward basic and acidic residues. Basic and acidic residues predominate over residues 835-850 (TVKTKEKAGTPSKENK). The span at 851-864 (LSQSKMLPKTGETT) shows a compositional bias: polar residues. The short motif at 857 to 861 (LPKTG) is the LPXTG sorting signal element. Residue T860 is modified to Pentaglycyl murein peptidoglycan amidated threonine. A propeptide spans 861 to 891 (GETTSSQSWWGLYALLGMLALFIPKFRKESK) (removed by sortase).

This sequence belongs to the IsdH family.

It is found in the secreted. The protein localises to the cell wall. In terms of biological role, binds human plasma haptoglobin-hemoglobin complexes, haptoglobin and hemoglobin. Binds haptoglobin-hemoglobin complexes with significantly higher affinity than haptoglobin alone. The protein is Iron-regulated surface determinant protein H (isdH) of Staphylococcus aureus (strain N315).